A 930-amino-acid polypeptide reads, in one-letter code: Isoleucine--tRNA ligase (930 aa).

The 'HIGH' region motif lies at 57-67 (PYANGNIHVGH). Glutamate 554 provides a ligand contact to L-isoleucyl-5'-AMP. The short motif at 595-599 (KMSKS) is the 'KMSKS' region element. Lysine 598 provides a ligand contact to ATP. Residues cysteine 888, cysteine 891, cysteine 908, and cysteine 911 each coordinate Zn(2+).

It belongs to the class-I aminoacyl-tRNA synthetase family. IleS type 1 subfamily. As to quaternary structure, monomer. Requires Zn(2+) as cofactor.

Its subcellular location is the cytoplasm. It carries out the reaction tRNA(Ile) + L-isoleucine + ATP = L-isoleucyl-tRNA(Ile) + AMP + diphosphate. Catalyzes the attachment of isoleucine to tRNA(Ile). As IleRS can inadvertently accommodate and process structurally similar amino acids such as valine, to avoid such errors it has two additional distinct tRNA(Ile)-dependent editing activities. One activity is designated as 'pretransfer' editing and involves the hydrolysis of activated Val-AMP. The other activity is designated 'posttransfer' editing and involves deacylation of mischarged Val-tRNA(Ile). In Streptococcus pneumoniae serotype 4 (strain ATCC BAA-334 / TIGR4), this protein is Isoleucine--tRNA ligase.